We begin with the raw amino-acid sequence, 114 residues long: Monothiol glutaredoxin-S8 (114 aa).

Residues 1 to 113 (MDRVTRLASQ…PLLRDAGALW (113 aa)) form the Glutaredoxin domain. [2Fe-2S] cluster is bound at residue cysteine 21.

Belongs to the glutaredoxin family. CC-type subfamily.

The protein resides in the cytoplasm. May only reduce GSH-thiol disulfides, but not protein disulfides. The chain is Monothiol glutaredoxin-S8 (GRXS8) from Oryza sativa subsp. japonica (Rice).